We begin with the raw amino-acid sequence, 303 residues long: Glycine--tRNA ligase alpha subunit (303 aa).

This sequence belongs to the class-II aminoacyl-tRNA synthetase family. In terms of assembly, tetramer of two alpha and two beta subunits.

It is found in the cytoplasm. The catalysed reaction is tRNA(Gly) + glycine + ATP = glycyl-tRNA(Gly) + AMP + diphosphate. This chain is Glycine--tRNA ligase alpha subunit, found in Streptococcus equi subsp. zooepidemicus (strain H70).